Consider the following 116-residue polypeptide: MVKKSEFERGDIVLVGFDPASGHEQQGAGRPALVLSVQAFNQLGMTLVAPITQGGNFARYAGFSVPLHCEEGDVHGVVLVNQVRMMDLHARLAKRIGLAADEVVEEALLRLQAVVE.

Belongs to the PemK/MazF family. As to quaternary structure, homodimer, interacts with ChpS, which inhibits the endoribonuclease activity.

Its activity is regulated as follows. Stimulated in vitro in a concentration-dependent fashion by extracellular death factor (EDF, a quorum sensing pentapeptide sequence NNWNN, probably produced from the zwf gene product glucose-6-phosphate 1-dehydrogenase), which is able to overcome inhibition by cognate antitoxin ChpS. Toxic component of a type II toxin-antitoxin (TA) system. ChpB is a sequence-specific mRNA and (weak) tmRNA endoribonuclease that inhibits protein synthesis and induces bacterial stasis. Cleavage is independent of the ribosome. Cleavage occurs at ACY sequences where Y is not C. The endoribonuclease activity is not as strong as that of MazF. The endoribonuclease activity (a toxin) is inhibited by its labile cognate antitoxin ChpS. Toxicity results when the levels of ChpS decrease in the cell, leading to mRNA degradation. Both ChpS and ChpB probably bind to the promoter region of the chpS-chpB operon to autoregulate their synthesis. The chain is Endoribonuclease toxin ChpB (chpB) from Escherichia coli (strain K12).